A 515-amino-acid polypeptide reads, in one-letter code: Maturase K (515 aa).

It belongs to the intron maturase 2 family. MatK subfamily.

It is found in the plastid. The protein localises to the chloroplast. Usually encoded in the trnK tRNA gene intron. Probably assists in splicing its own and other chloroplast group II introns. This chain is Maturase K, found in Pinus roxburghii (Chir pine).